The chain runs to 295 residues: UDP-3-O-acyl-N-acetylglucosamine deacetylase (295 aa).

3 residues coordinate Zn(2+): His75, His232, and Asp236. The active-site Proton donor is His259.

Belongs to the LpxC family. It depends on Zn(2+) as a cofactor.

The catalysed reaction is a UDP-3-O-[(3R)-3-hydroxyacyl]-N-acetyl-alpha-D-glucosamine + H2O = a UDP-3-O-[(3R)-3-hydroxyacyl]-alpha-D-glucosamine + acetate. The protein operates within glycolipid biosynthesis; lipid IV(A) biosynthesis; lipid IV(A) from (3R)-3-hydroxytetradecanoyl-[acyl-carrier-protein] and UDP-N-acetyl-alpha-D-glucosamine: step 2/6. Its function is as follows. Catalyzes the hydrolysis of UDP-3-O-myristoyl-N-acetylglucosamine to form UDP-3-O-myristoylglucosamine and acetate, the committed step in lipid A biosynthesis. This is UDP-3-O-acyl-N-acetylglucosamine deacetylase from Helicobacter pylori (strain J99 / ATCC 700824) (Campylobacter pylori J99).